The sequence spans 193 residues: 7-methyl-GTP pyrophosphatase (193 aa).

The active-site Proton acceptor is the Asp70.

The protein belongs to the Maf family. YceF subfamily. Requires a divalent metal cation as cofactor.

The protein localises to the cytoplasm. It carries out the reaction N(7)-methyl-GTP + H2O = N(7)-methyl-GMP + diphosphate + H(+). Nucleoside triphosphate pyrophosphatase that hydrolyzes 7-methyl-GTP (m(7)GTP). May have a dual role in cell division arrest and in preventing the incorporation of modified nucleotides into cellular nucleic acids. In Vibrio parahaemolyticus serotype O3:K6 (strain RIMD 2210633), this protein is 7-methyl-GTP pyrophosphatase.